A 207-amino-acid chain; its full sequence is Small ribosomal subunit protein uS4 (207 aa).

The tract at residues 30-53 (DKSKFDTKPGQHGRTSGQRTSDFG) is disordered. The segment covering 42-52 (GRTSGQRTSDF) has biased composition (polar residues). Positions 97–157 (SRLDNVVYRM…EKSKKQARIV (61 aa)) constitute an S4 RNA-binding domain.

The protein belongs to the universal ribosomal protein uS4 family. As to quaternary structure, part of the 30S ribosomal subunit. Contacts protein S5. The interaction surface between S4 and S5 is involved in control of translational fidelity.

One of the primary rRNA binding proteins, it binds directly to 16S rRNA where it nucleates assembly of the body of the 30S subunit. In terms of biological role, with S5 and S12 plays an important role in translational accuracy. This chain is Small ribosomal subunit protein uS4, found in Delftia acidovorans (strain DSM 14801 / SPH-1).